We begin with the raw amino-acid sequence, 98 residues long: Acylphosphatase (98 aa).

One can recognise an Acylphosphatase-like domain in the interval 12-98 (TYYVRVRGVV…ERRFERFQQQ (87 aa)). Residues arginine 27 and asparagine 45 contribute to the active site.

It belongs to the acylphosphatase family.

It carries out the reaction an acyl phosphate + H2O = a carboxylate + phosphate + H(+). The sequence is that of Acylphosphatase (acyP) from Burkholderia vietnamiensis (strain G4 / LMG 22486) (Burkholderia cepacia (strain R1808)).